The sequence spans 201 residues: MDIKACYQNAQALLEGHFLLSSGFHSNYYLQSAKVLEDPKLAEQLAKELAKQIQEAHLNIECVCSPAIGGILAGYELARALGVRFIFTERVDNTMTLRRGFEVKKNEKILVCEDIITTGKSAMECTKVLEEKGAQIVAFGALANRGICKRTHSHLKAQEGACLPSHLPLFALEDFVFDMHKPNSCPLCATSVAIKPGSRGN.

Glu-113 to Ser-121 serves as a coordination point for 5-phospho-alpha-D-ribose 1-diphosphate. Residues Thr-117 and Arg-145 each contribute to the orotate site.

This sequence belongs to the purine/pyrimidine phosphoribosyltransferase family. PyrE subfamily. Homodimer. Requires Mg(2+) as cofactor.

The catalysed reaction is orotidine 5'-phosphate + diphosphate = orotate + 5-phospho-alpha-D-ribose 1-diphosphate. The protein operates within pyrimidine metabolism; UMP biosynthesis via de novo pathway; UMP from orotate: step 1/2. In terms of biological role, catalyzes the transfer of a ribosyl phosphate group from 5-phosphoribose 1-diphosphate to orotate, leading to the formation of orotidine monophosphate (OMP). In Helicobacter pylori (strain P12), this protein is Orotate phosphoribosyltransferase.